Consider the following 239-residue polypeptide: Transcriptional regulatory protein BtsR (239 aa).

A Response regulatory domain is found at 3-116 (KVLIVDDEPL…RLEKTLARLR (114 aa)). Asp54 carries the post-translational modification 4-aspartylphosphate. The HTH LytTR-type domain occupies 137 to 239 (IPCTGHSRIY…LKSLKEAIGL (103 aa)).

In terms of processing, phosphorylated by BtsS.

In terms of biological role, member of the two-component regulatory system BtsS/BtsR. BtsR regulates expression of btsT by binding to its promoter region. The chain is Transcriptional regulatory protein BtsR from Escherichia coli O6:H1 (strain CFT073 / ATCC 700928 / UPEC).